Consider the following 132-residue polypeptide: Small ribosomal subunit protein uS12 (132 aa).

D89 is modified (3-methylthioaspartic acid). The disordered stretch occupies residues 106-132 (GVKDRKKSRSKYGTKKPKEAAKTAAKK). Residues 109–120 (DRKKSRSKYGTK) are compositionally biased toward basic residues.

It belongs to the universal ribosomal protein uS12 family. As to quaternary structure, part of the 30S ribosomal subunit. Contacts proteins S8 and S17. May interact with IF1 in the 30S initiation complex.

Functionally, with S4 and S5 plays an important role in translational accuracy. In terms of biological role, interacts with and stabilizes bases of the 16S rRNA that are involved in tRNA selection in the A site and with the mRNA backbone. Located at the interface of the 30S and 50S subunits, it traverses the body of the 30S subunit contacting proteins on the other side and probably holding the rRNA structure together. The combined cluster of proteins S8, S12 and S17 appears to hold together the shoulder and platform of the 30S subunit. This Thermus thermophilus (strain ATCC BAA-163 / DSM 7039 / HB27) protein is Small ribosomal subunit protein uS12 (rpsL).